Here is a 78-residue protein sequence, read N- to C-terminus: Acyl carrier protein (78 aa).

The Carrier domain occupies 2–77 (STIEERVKKI…EAIDYVTAHA (76 aa)). Serine 37 is modified (O-(pantetheine 4'-phosphoryl)serine).

The protein belongs to the acyl carrier protein (ACP) family. 4'-phosphopantetheine is transferred from CoA to a specific serine of apo-ACP by AcpS. This modification is essential for activity because fatty acids are bound in thioester linkage to the sulfhydryl of the prosthetic group.

Its subcellular location is the cytoplasm. Its pathway is lipid metabolism; fatty acid biosynthesis. Functionally, carrier of the growing fatty acid chain in fatty acid biosynthesis. This Ectopseudomonas mendocina (strain ymp) (Pseudomonas mendocina) protein is Acyl carrier protein.